The sequence spans 416 residues: Meiotically up-regulated protein PB1A10.08 (416 aa).

It localises to the cytoplasm. In terms of biological role, may have a role in meiosis and sporulation. This chain is Meiotically up-regulated protein PB1A10.08, found in Schizosaccharomyces pombe (strain 972 / ATCC 24843) (Fission yeast).